The primary structure comprises 80 residues: U19-lycotoxin-Ls1a (80 aa).

A signal peptide spans 1 to 22; it reads MSPKVQALIFIVGLITLLAAHA. Positions 23–34 are excised as a propeptide; sequence QEELSDNIESER. Disulfide bonds link Cys36–Cys50, Cys43–Cys55, Cys49–Cys66, and Cys57–Cys64.

Belongs to the neurotoxin 02 (plectoxin) family. 05 (U19-lycotoxin) subfamily. In terms of tissue distribution, expressed by the venom gland.

The protein resides in the secreted. The polypeptide is U19-lycotoxin-Ls1a (Lycosa singoriensis (Wolf spider)).